The primary structure comprises 871 residues: Pentatricopeptide repeat-containing protein DOT4, chloroplastic (871 aa).

The N-terminal 28 residues, 1-28 (MAMLVTNLSSSSFCFFSSPHLQNQKEIR), are a transit peptide targeting the chloroplast. PPR repeat units follow at residues 60–94 (SVTD…DIDP), 96–127 (TLCS…GFVI), 128–158 (DSNL…VKIE), 159–193 (KALF…GVEM), 194–228 (DSYT…GFGE), 229–259 (RNSV…MTER), 260–294 (DVIS…GIEI), 295–329 (DLAT…CFSR), 330–360 (EDRF…MSDR), 361–395 (SVVS…GISP), 396–430 (DVYT…DLGF), 431–465 (DIFV…DIIS), 466–497 (WNTI…RFSP), 498–532 (DERT…GYFS), 533–563 (DRHV…IASK), 564–598 (DLVS…GIEA), 599–629 (DEIS…MRHE), and 635–665 (TVEH…MPIP). Residues 670–745 (IWGALLCGCR…NPGCSWIEIK (76 aa)) are type E motif. The segment at 746–776 (GRVNIFVAGDSSNPETENIEAFLRKVRARMI) is type E(+) motif. The tract at residues 777–871 (EEGYSPLTKY…DGHCSCRGFW (95 aa)) is type DYW motif.

Belongs to the PPR family. PCMP-H subfamily. It depends on Zn(2+) as a cofactor. In terms of tissue distribution, weakly expressed in leaves.

It is found in the plastid. The protein resides in the chloroplast. Plays a major role in single RNA editing events in chloroplasts. Acts as a site-recognition transacting factor involved in the edition of the unique site (corresponding to cytidine-488) of rpoC1, which is a plastid-encoded subunit of the chloroplast DNA-directed RNA polymerase. May provide the catalytic activity for editing site conversion. Involved in leaf vasculature patterning. The protein is Pentatricopeptide repeat-containing protein DOT4, chloroplastic of Arabidopsis thaliana (Mouse-ear cress).